Reading from the N-terminus, the 65-residue chain is Large ribosomal subunit protein bL35c (65 aa).

A disordered region spans residues 18–50; it reads SSGKILRHKASKSHLLQKKSSKHRRHLSSTCQV. Basic residues predominate over residues 22-44; sequence ILRHKASKSHLLQKKSSKHRRHL.

This sequence belongs to the bacterial ribosomal protein bL35 family.

The protein localises to the plastid. Its subcellular location is the chloroplast. This is Large ribosomal subunit protein bL35c from Porphyra purpurea (Red seaweed).